Reading from the N-terminus, the 196-residue chain is Probable GTP-binding protein EngB (196 aa).

Residues 22–193 enclose the EngB-type G domain; it reads SLPEVAFVGR…LEEIRKAKGE (172 aa). Residues 30 to 37, 57 to 61, 75 to 78, 142 to 145, and 172 to 174 contribute to the GTP site; these read GRSNVGKS, GRTQL, DLPG, TKSD, and FSA. 2 residues coordinate Mg(2+): Ser37 and Thr59.

Belongs to the TRAFAC class TrmE-Era-EngA-EngB-Septin-like GTPase superfamily. EngB GTPase family. Requires Mg(2+) as cofactor.

Its function is as follows. Necessary for normal cell division and for the maintenance of normal septation. This is Probable GTP-binding protein EngB from Syntrophus aciditrophicus (strain SB).